The primary structure comprises 84 residues: Large ribosomal subunit protein bL27 (84 aa).

Positions 1 to 22 (MAHKKAGGSTRNGRDSESKRLG) are disordered.

This sequence belongs to the bacterial ribosomal protein bL27 family.

In Shewanella woodyi (strain ATCC 51908 / MS32), this protein is Large ribosomal subunit protein bL27.